The chain runs to 308 residues: Cyclin-D2-1 (308 aa).

The segment at 286–308 (EGLSYDSSSPPPPKRRKRSPPGT) is disordered. Basic residues predominate over residues 298–308 (PKRRKRSPPGT).

Belongs to the cyclin family. Cyclin D subfamily.

This is Cyclin-D2-1 (CYCD2-1) from Oryza sativa subsp. japonica (Rice).